A 358-amino-acid chain; its full sequence is Chorismate synthase (358 aa).

Residue R47 coordinates NADP(+). FMN-binding positions include 124 to 126 (RSS), 240 to 241 (NA), G284, 299 to 303 (KPIAT), and R325.

It belongs to the chorismate synthase family. As to quaternary structure, homotetramer. The cofactor is FMNH2.

It catalyses the reaction 5-O-(1-carboxyvinyl)-3-phosphoshikimate = chorismate + phosphate. It participates in metabolic intermediate biosynthesis; chorismate biosynthesis; chorismate from D-erythrose 4-phosphate and phosphoenolpyruvate: step 7/7. Its function is as follows. Catalyzes the anti-1,4-elimination of the C-3 phosphate and the C-6 proR hydrogen from 5-enolpyruvylshikimate-3-phosphate (EPSP) to yield chorismate, which is the branch point compound that serves as the starting substrate for the three terminal pathways of aromatic amino acid biosynthesis. This reaction introduces a second double bond into the aromatic ring system. This is Chorismate synthase from Bacteroides thetaiotaomicron (strain ATCC 29148 / DSM 2079 / JCM 5827 / CCUG 10774 / NCTC 10582 / VPI-5482 / E50).